Here is a 258-residue protein sequence, read N- to C-terminus: Coiled-coil domain-containing protein 107 (258 aa).

The first 24 residues, 1 to 24 (MASVVSLAGTLGLLLVSALPEVLG), serve as a signal peptide directing secretion. Residues 25–35 (DRRSPDRRAHP) are compositionally biased toward basic and acidic residues. The disordered stretch occupies residues 25 to 63 (DRRSPDRRAHPGDAGQVGPAAAEPRRQSPPSKNQRERAR). A helical transmembrane segment spans residues 66–86 (ALPLGALYTAAAVAFVLYKCL). Residues 106-134 (LQSEQHLAQLTQQLVQTEQHLNSLMAQLD) are a coiled coil. Residues 203 to 222 (EPLNWNTGTRNLTPPREMQP) form a disordered region.

The protein resides in the membrane. This is Coiled-coil domain-containing protein 107 (CCDC107) from Bos taurus (Bovine).